Consider the following 305-residue polypeptide: UDP-3-O-acyl-N-acetylglucosamine deacetylase (305 aa).

Residues H78, H237, and D241 each contribute to the Zn(2+) site. Catalysis depends on H264, which acts as the Proton donor.

Belongs to the LpxC family. Requires Zn(2+) as cofactor.

It catalyses the reaction a UDP-3-O-[(3R)-3-hydroxyacyl]-N-acetyl-alpha-D-glucosamine + H2O = a UDP-3-O-[(3R)-3-hydroxyacyl]-alpha-D-glucosamine + acetate. Its pathway is glycolipid biosynthesis; lipid IV(A) biosynthesis; lipid IV(A) from (3R)-3-hydroxytetradecanoyl-[acyl-carrier-protein] and UDP-N-acetyl-alpha-D-glucosamine: step 2/6. In terms of biological role, catalyzes the hydrolysis of UDP-3-O-myristoyl-N-acetylglucosamine to form UDP-3-O-myristoylglucosamine and acetate, the committed step in lipid A biosynthesis. In Paraburkholderia phytofirmans (strain DSM 17436 / LMG 22146 / PsJN) (Burkholderia phytofirmans), this protein is UDP-3-O-acyl-N-acetylglucosamine deacetylase.